We begin with the raw amino-acid sequence, 211 residues long: SAGA-associated factor 11 homolog 2 (211 aa).

The SGF11-type zinc-finger motif lies at 115–136 (CTCPNCDRLVAAARFAPHLEKC). The disordered stretch occupies residues 149-211 (RRLATKEGSS…GSKKNNGKTF (63 aa)). The segment covering 157–166 (SSASTSSTST) has biased composition (low complexity). Phosphoserine is present on Ser187. The segment covering 197 to 211 (SSRNNGSKKNNGKTF) has biased composition (low complexity).

The protein belongs to the SGF11 family. As to quaternary structure, component of some SAGA transcription coactivator-HAT complexes, at least composed of Ada2b, not/nonstop, Pcaf/Gcn5, Sgf11 and Spt3. Within the SAGA complex, Sgf11, e(y)2, and not/nonstop form an additional subcomplex of SAGA called the DUB module (deubiquitination module). Interacts directly with not/nonstop. Interacts with the AMEX complex component xmas-2. Interacts with Cbp80; important for promoter recruitment of Sgf11 that is not associated with the DUB module.

Its subcellular location is the nucleus. It localises to the nucleoplasm. The protein resides in the cytoplasm. Functionally, component of the transcription regulatory histone acetylation (HAT) complex SAGA, a multiprotein complex that activates transcription by remodeling chromatin and mediating histone acetylation and deubiquitination. Within the SAGA complex, participates in a subcomplex that specifically deubiquitinates histone H2B. The SAGA complex is recruited to specific gene promoters by activators, where it is required for transcription. Required for nuclear receptor-mediated transactivation. Binds independently on SAGA to promoters in an RNA-dependent manner. Binds to mRNA and is essential for total mRNA export from the nucleus. Required to counteract heterochromatin silencing. Controls the development of neuronal connectivity in visual system by being required for accurate axon targeting in the optic lobe. Required for expression of ecdysone-induced genes such as br/broad. In Drosophila grimshawi (Hawaiian fruit fly), this protein is SAGA-associated factor 11 homolog 2.